The chain runs to 174 residues: MSESPSWMAKVEKIANDVAAAQGCVLYDIEFVGLGKGRTLRLFIDREEEGAISIEDCTNVSRGLSEILDADEEMIPGGEYNLEVSTPGLDRHLKKPWHFKKAIGKKVYIKTTKALESVGVEDKKWKNAKTVEEVLESADEQGVRFVVKDVEIKIPYAMIDRAKLVFEYTKGQKK.

It belongs to the RimP family.

It is found in the cytoplasm. Functionally, required for maturation of 30S ribosomal subunits. This Bdellovibrio bacteriovorus (strain ATCC 15356 / DSM 50701 / NCIMB 9529 / HD100) protein is Ribosome maturation factor RimP.